A 246-amino-acid chain; its full sequence is tRNA (guanine-N(1)-)-methyltransferase (246 aa).

Residues Gly-113 and 133 to 138 (IGDYVL) contribute to the S-adenosyl-L-methionine site.

It belongs to the RNA methyltransferase TrmD family. Homodimer.

The protein localises to the cytoplasm. The catalysed reaction is guanosine(37) in tRNA + S-adenosyl-L-methionine = N(1)-methylguanosine(37) in tRNA + S-adenosyl-L-homocysteine + H(+). Functionally, specifically methylates guanosine-37 in various tRNAs. The chain is tRNA (guanine-N(1)-)-methyltransferase from Haemophilus influenzae (strain PittGG).